Here is a 365-residue protein sequence, read N- to C-terminus: uncharacterized protein (365 aa).

This is an uncharacterized protein from Archaeoglobus fulgidus (strain ATCC 49558 / DSM 4304 / JCM 9628 / NBRC 100126 / VC-16).